We begin with the raw amino-acid sequence, 299 residues long: Small ribosomal subunit protein uS2 (299 aa).

Positions 210–299 (AEKEEQTQVV…GAATDNSWAS (90 aa)) are disordered. Polar residues predominate over residues 275–285 (WASTGTATVGP).

It belongs to the universal ribosomal protein uS2 family. Component of the small ribosomal subunit. Mature ribosomes consist of a small (40S) and a large (60S) subunit. The 40S subunit contains about 33 different proteins and 1 molecule of RNA (18S). The 60S subunit contains about 49 different proteins and 3 molecules of RNA (28S, 5.8S and 5S). Interacts with ribosomal protein S21.

The protein resides in the cytoplasm. Functionally, required for the assembly and/or stability of the 40S ribosomal subunit. Required for the processing of the 20S rRNA-precursor to mature 18S rRNA in a late step of the maturation of 40S ribosomal subunits. The polypeptide is Small ribosomal subunit protein uS2 (Ornithodoros parkeri (Soft tick)).